A 188-amino-acid polypeptide reads, in one-letter code: Probable manganese efflux pump MntP (188 aa).

The next 6 membrane-spanning stretches (helical) occupy residues 3–23 (FTAT…ASIG), 41–61 (LIFG…GILA), 66–86 (LEWN…RMII), 106–128 (WLLV…GLAF), 143–163 (ATLI…PMLG), and 168–188 (ILGG…HFHG).

Belongs to the MntP (TC 9.B.29) family.

It localises to the cell inner membrane. Its function is as follows. Probably functions as a manganese efflux pump. The chain is Probable manganese efflux pump MntP from Salmonella typhimurium (strain LT2 / SGSC1412 / ATCC 700720).